The chain runs to 501 residues: Geissoschizine oxidase (501 aa).

A helical transmembrane segment spans residues 1-21; the sequence is MEFSFSSPALYIVYFLLFFVV. The N-linked (GlcNAc...) asparagine glycan is linked to Asn60. Cys442 serves as a coordination point for heme.

This sequence belongs to the cytochrome P450 family. Requires heme as cofactor. As to expression, expressed in leaf epidermis. Also present in the leaf internal phloem-associated parenchyma (IPAP) inside the mesophyll.

It localises to the membrane. The enzyme catalyses (19E)-geissoschizine + reduced [NADPH--hemoprotein reductase] + O2 = akuammicine + formate + oxidized [NADPH--hemoprotein reductase] + H2O + H(+). It carries out the reaction (19E)-geissoschizine + reduced [NADPH--hemoprotein reductase] + O2 = 3,17-didehydrostemmadenine + oxidized [NADPH--hemoprotein reductase] + 2 H2O. Its pathway is alkaloid biosynthesis. Its function is as follows. Component of the seco-iridoid and derivatives monoterpenoid indole alkaloids (MIAs, e.g. vincristine, quinine, and strychnine) biosynthesis pathway. Catalyzes the oxidation of 19E-geissoschizine to produce a short-lived MIA unstable intermediate which can be spontaneously converted into akuammicine or oxidized by Redox1 and Redox2 to produce stemmadenine and 16S/R-deshydroxymethylstemmadenine (16S/R-DHS). This chain is Geissoschizine oxidase, found in Catharanthus roseus (Madagascar periwinkle).